Reading from the N-terminus, the 397-residue chain is Succinate--CoA ligase [ADP-forming] subunit beta (397 aa).

The region spanning 9–254 (KALLRSYGAP…ETEEDPKELA (246 aa)) is the ATP-grasp domain. ATP-binding positions include Lys-46, 53-55 (GRG), Glu-109, Ser-112, and Glu-117. The Mg(2+) site is built by Asn-209 and Asp-223. Residues Asn-274 and 331–333 (GIM) each bind substrate.

It belongs to the succinate/malate CoA ligase beta subunit family. As to quaternary structure, heterotetramer of two alpha and two beta subunits. Requires Mg(2+) as cofactor.

The enzyme catalyses succinate + ATP + CoA = succinyl-CoA + ADP + phosphate. It catalyses the reaction GTP + succinate + CoA = succinyl-CoA + GDP + phosphate. It functions in the pathway carbohydrate metabolism; tricarboxylic acid cycle; succinate from succinyl-CoA (ligase route): step 1/1. In terms of biological role, succinyl-CoA synthetase functions in the citric acid cycle (TCA), coupling the hydrolysis of succinyl-CoA to the synthesis of either ATP or GTP and thus represents the only step of substrate-level phosphorylation in the TCA. The beta subunit provides nucleotide specificity of the enzyme and binds the substrate succinate, while the binding sites for coenzyme A and phosphate are found in the alpha subunit. In Cereibacter sphaeroides (strain ATCC 17025 / ATH 2.4.3) (Rhodobacter sphaeroides), this protein is Succinate--CoA ligase [ADP-forming] subunit beta.